A 208-amino-acid polypeptide reads, in one-letter code: Small ribosomal subunit protein uS4 (208 aa).

Positions 98-158 constitute an S4 RNA-binding domain; sequence RRLDNIAYRL…EKSRKVACIN (61 aa).

Belongs to the universal ribosomal protein uS4 family. Part of the 30S ribosomal subunit. Contacts protein S5. The interaction surface between S4 and S5 is involved in control of translational fidelity.

Functionally, one of the primary rRNA binding proteins, it binds directly to 16S rRNA where it nucleates assembly of the body of the 30S subunit. With S5 and S12 plays an important role in translational accuracy. The protein is Small ribosomal subunit protein uS4 of Geotalea uraniireducens (strain Rf4) (Geobacter uraniireducens).